Consider the following 476-residue polypeptide: Glutamyl-tRNA(Gln) amidotransferase subunit A (476 aa).

Active-site charge relay system residues include lysine 76 and serine 151. The active-site Acyl-ester intermediate is serine 175.

Belongs to the amidase family. GatA subfamily. Heterotrimer of A, B and C subunits.

It catalyses the reaction L-glutamyl-tRNA(Gln) + L-glutamine + ATP + H2O = L-glutaminyl-tRNA(Gln) + L-glutamate + ADP + phosphate + H(+). Functionally, allows the formation of correctly charged Gln-tRNA(Gln) through the transamidation of misacylated Glu-tRNA(Gln) in organisms which lack glutaminyl-tRNA synthetase. The reaction takes place in the presence of glutamine and ATP through an activated gamma-phospho-Glu-tRNA(Gln). The protein is Glutamyl-tRNA(Gln) amidotransferase subunit A of Chlorobium phaeobacteroides (strain DSM 266 / SMG 266 / 2430).